Consider the following 1182-residue polypeptide: NACHT, LRR and PYD domains-containing protein 1a (1182 aa).

The disordered stretch occupies residues 1–23 (MEESQSKQESSTKVAQHEGQEDV). In terms of domain architecture, NACHT spans 133–442 (QLVIIEGAAG…EFFAAMSYIL (310 aa)). ATP is bound at residue 139 to 146 (GAAGIGKS). 3 LRR repeats span residues 634 to 655 (NLEELDLSGNPLSYYAVHSLCT), 691 to 711 (SLTELDLQLNDLGDGGVKMLC), and 720 to 743 (NLSILWLDQASLSDQVIAELRTLE). Residues 780 to 806 (QQRQQSGDKHMEPLGTEDEFWGPTGPV) form a disordered region. A ZU5 region spans residues 799–932 (FWGPTGPVTT…HYAVLENPSF (134 aa)). Residues 799–1082 (FWGPTGPVTT…LRPALPKIAT (284 aa)) enclose the FIIND domain. Positions 933–1082 (SPMGILLRMI…LRPALPKIAT (150 aa)) are UPA. One can recognise a CARD domain in the interval 1092 to 1175 (HFMDQHREQL…HLVMDILEKL (84 aa)).

It belongs to the NLRP family. As to quaternary structure, interacts (via LRR repeats) with BCL2 and BCL2L1 (via the loop between motifs BH4 and BH3). Interacts with NOD2; this interaction is enhanced in the presence of muramyl dipeptide (MDP) and increases IL1B release. Interacts with EIF2AK2/PKR; this interaction requires EIF2AK2 activity, is accompanied by EIF2AK2 autophosphorylation and promotes inflammasome assembly in response to danger-associated signals. Interacts with MEFV; this interaction targets Nlrp1a to degradation by autophagy, hence preventing excessive IL1B- and IL18-mediated inflammation. Interacts with DPP9; leading to inhibit activation of the inflammasome. DPP9 acts via formation of a ternary complex, composed of a DPP9 homodimer, one full-length Nlrp1a protein, and one cleaved C-terminus of Nlrp1a (NACHT, LRR and PYD domains-containing protein 1a, C-terminus). Interacts with DPP8; leading to inhibit activation of the inflammasome, probably via formation of a ternary complex with DPP8. In terms of assembly, interacts with the C-terminal part of Nlrp1a (NACHT, LRR and PYD domains-containing protein 1a, C-terminus) in absence of pathogens and other damage-associated signals. Interacts with the N-terminal part of Nlrp1a (NACHT, LRR and PYD domains-containing protein 1a, N-terminus) in absence of pathogens and other damage-associated signals. Homomultimer; forms the Nlrp1a inflammasome polymeric complex, a filament composed of homopolymers of this form in response to pathogens and other damage-associated signals. Interacts (via CARD domain) with CASP1 (via CARD domain); leading to CASP1 activation. Post-translationally, autocatalytically cleaved. Autocatalytic cleavage in FIIND region occurs constitutively, prior to activation signals, and is required for inflammasome activity (IL1B release), possibly by facilitating CASP1 binding. Both N- and C-terminal parts remain associated non-covalently. Ubiquitinated in response to pathogen-associated signals, leading to its degradation by the proteasome and subsequent release of the cleaved C-terminal part of the protein (NACHT, LRR and PYD domains-containing protein 1a, C-terminus), which polymerizes and forms the Nlrp1a inflammasome. Highly expressed in hematopoietic stem cells and progenitor cells of both myeloid and lymphoid origin. The expression is highly strain-dependent. Not expressed in Balb/cJ animals, but widely expressed in C57BL/6J. Expressed in macrophages resistant to Bacillus anthracis lethal toxin, but not in toxin-sensitive macrophages, except in CAST/EiJ strain.

The protein localises to the cytoplasm. It is found in the cytosol. The protein resides in the nucleus. It localises to the inflammasome. Its activity is regulated as follows. Nlrp1a inflammasome is activated by pathogens and other damage-associated signals: activation promotes ubiquitination and degradation of the N-terminal part, releasing the cleaved C-terminal part of the protein (NACHT, LRR and PYD domains-containing protein 1a, C-terminus), which polymerizes and forms the Nlrp1a inflammasome. Nlrp1a inflammasome is inhibited by DPP8 and DPP9, which sequester the C-terminal fragment of Nlrp1a (NACHT, LRR and PYD domains-containing protein 1a, C-terminus) in a ternary complex, thereby preventing Nlrp1a oligomerization and activation. Nlrp1a inflammasome is activated by Val-boroPro (Talabostat, PT-100), an inhibitor of dipeptidyl peptidases DPP8 and DPP9. Val-boroPro relieves inhibition of DPP8 and/or DPP9 by promoting disruption of the ternary complex, releasing its C-terminal part from autoinhibition. Acts as the sensor component of the Nlrp1a inflammasome, which mediates inflammasome activation in response to various pathogen-associated signals, leading to subsequent pyroptosis. Inflammasomes are supramolecular complexes that assemble in the cytosol in response to pathogens and other damage-associated signals and play critical roles in innate immunity and inflammation. Acts as a recognition receptor (PRR): recognizes specific pathogens and other damage-associated signals, and mediates the formation of the inflammasome polymeric complex. In response to pathogen-associated signals, the N-terminal part of Nlrp1a is degraded by the proteasome, releasing the cleaved C-terminal part of the protein (NACHT, LRR and PYD domains-containing protein 1a, C-terminus), which polymerizes to initiate the formation of the inflammasome complex: the inflammasome recruits pro-caspase-1 (proCASP1) and promotes caspase-1 (CASP1) activation, which subsequently cleaves and activates inflammatory cytokines IL1B and IL18 and gasdermin-D (GSDMD), leading to pyroptosis. In the absence of GSDMD expression, the Nlrp1a inflammasome is able to recruit and activate CASP8, leading to activation of gasdermin-E (GSDME). Activation of Nlrp1a inflammasome is also required for HMGB1 secretion; the active cytokines and HMGB1 stimulate inflammatory responses. When activated in the bone marrow, induces the pyroptosis of hematopoietic stem cells and progenitor cells of both myeloid and lymphoid lineages, hence allowing the removal of damaged cells, and the release of IL1B, which induces granulopoiesis. Its function is as follows. Constitutes the precursor of the Nlrp1a inflammasome, which mediates autoproteolytic processing within the FIIND domain to generate the N-terminal and C-terminal parts, which are associated non-covalently in absence of pathogens and other damage-associated signals. Functionally, regulatory part that prevents formation of the Nlrp1a inflammasome: in absence of pathogens and other damage-associated signals, interacts with the C-terminal part of Nlrp1a (NACHT, LRR and PYD domains-containing protein 1a, C-terminus), preventing activation of the Nlrp1a inflammasome. In response to pathogen-associated signals, this part is ubiquitinated and degraded by the proteasome, releasing the cleaved C-terminal part of the protein, which polymerizes and forms the Nlrp1a inflammasome. In terms of biological role, constitutes the active part of the Nlrp1a inflammasome. In absence of pathogens and other damage-associated signals, interacts with the N-terminal part of Nlrp1a (NACHT, LRR and PYD domains-containing protein 1a, N-terminus), preventing activation of the Nlrp1a inflammasome. In response to pathogen-associated signals, the N-terminal part of Nlrp1a is degraded by the proteasome, releasing this form, which polymerizes to form the Nlrp1a inflammasome complex: the Nlrp1a inflammasome complex then directly recruits pro-caspase-1 (proCASP1) and promotes caspase-1 (CASP1) activation, leading to gasdermin-D (GSDMD) cleavage and subsequent pyroptosis. The polypeptide is NACHT, LRR and PYD domains-containing protein 1a (Mus musculus (Mouse)).